The sequence spans 270 residues: Putative carbamate hydrolase RutD (270 aa).

It belongs to the AB hydrolase superfamily. Hydrolase RutD family.

The catalysed reaction is carbamate + 2 H(+) = NH4(+) + CO2. Involved in pyrimidine catabolism. May facilitate the hydrolysis of carbamate, a reaction that can also occur spontaneously. The protein is Putative carbamate hydrolase RutD of Escherichia coli (strain SMS-3-5 / SECEC).